The primary structure comprises 295 residues: Lipase 2 (295 aa).

The N-terminal stretch at 1–31 is a signal peptide; it reads MPKPALRRVMTATVAAVGTLALGLTDATAHA. Ser-48 serves as the catalytic Nucleophile. 3 cysteine pairs are disulfide-bonded: Cys-65–Cys-89, Cys-138–Cys-152, and Cys-205–Cys-254. His-275 is an active-site residue.

This sequence belongs to the 'GDSL' lipolytic enzyme family. As to quaternary structure, monomer.

The protein localises to the secreted. It catalyses the reaction a triacylglycerol + H2O = a diacylglycerol + a fatty acid + H(+). With respect to regulation, strongly inhibited by Ag(+). The cations Ca(2+) and Mg(2+) do not significantly reduce the lipolytic activity of SCO7513, whereas high concentrations of Co(2+) and Cu(2+) partially inhibit it. Is not inhibited by DTT in vitro. Is resistant to PMSF inhibition, except in the presence of Ca(2+). Its function is as follows. Catalyzes the hydrolysis of fatty acid esters with a preference for long chain fatty acids (C16-C18). The protein is Lipase 2 of Streptomyces coelicolor (strain ATCC BAA-471 / A3(2) / M145).